Here is a 295-residue protein sequence, read N- to C-terminus: tRNA pseudouridine synthase A (295 aa).

The active-site Nucleophile is the aspartate 67. Residue tyrosine 125 coordinates substrate.

Belongs to the tRNA pseudouridine synthase TruA family. Homodimer.

It catalyses the reaction uridine(38/39/40) in tRNA = pseudouridine(38/39/40) in tRNA. Functionally, formation of pseudouridine at positions 38, 39 and 40 in the anticodon stem and loop of transfer RNAs. The chain is tRNA pseudouridine synthase A from Prochlorococcus marinus (strain MIT 9303).